A 173-amino-acid chain; its full sequence is Alpha-crystallin A chain (173 aa).

Met-1 carries the N-acetylmethionine modification. Residues 1 to 63 are required for complex formation with BFSP1 and BFSP2; sequence MDIAIQHPWF…RTVLDSGISE (63 aa). Residue Gln-6 is modified to Deamidated glutamine; partial. Phosphoserine is present on Ser-45. Deamidated glutamine; partial is present on Gln-50. In terms of domain architecture, sHSP spans 52 to 162; the sequence is LFRTVLDSGI…GHSERAIPVS (111 aa). Lys-70 and Lys-99 each carry N6-acetyllysine. Zn(2+) is bound at residue His-100. Residue Asn-101 is modified to Deamidated asparagine; partial. Zn(2+) contacts are provided by Glu-102 and His-107. A Phosphoserine modification is found at Ser-122. Asn-123 is modified (deamidated asparagine; partial). The interval 144–173 is disordered; sequence PKVPSGVDAGHSERAIPVSREEKPSSAPSS. Basic and acidic residues predominate over residues 153 to 167; it reads GHSERAIPVSREEKP. His-154 contributes to the Zn(2+) binding site. Ser-162 carries an O-linked (GlcNAc) serine glycan.

The protein belongs to the small heat shock protein (HSP20) family. As to quaternary structure, heteromer composed of three CRYAA and one CRYAB subunits. Inter-subunit bridging via zinc ions enhances stability, which is crucial as there is no protein turn over in the lens. Can also form homodimers and homotetramers (dimers of dimers) which serve as the building blocks of homooligomers. Within homooligomers, the zinc-binding motif is created from residues of 3 different molecules. His-100 and Glu-102 from one molecule are ligands of the zinc ion, and His-107 and His-154 residues from additional molecules complete the site with tetrahedral coordination geometry. Part of a complex required for lens intermediate filament formation composed of BFSP1, BFSP2 and CRYAA. In terms of processing, acetylation at Lys-70 may increase chaperone activity. Undergoes age-dependent proteolytical cleavage at the C-terminus.

The protein localises to the cytoplasm. Its subcellular location is the nucleus. Its function is as follows. Contributes to the transparency and refractive index of the lens. Acts as a chaperone, preventing aggregation of various proteins under a wide range of stress conditions. Required for the correct formation of lens intermediate filaments as part of a complex composed of BFSP1, BFSP2 and CRYAA. The protein is Alpha-crystallin A chain (CRYAA) of Canis lupus familiaris (Dog).